We begin with the raw amino-acid sequence, 149 residues long: Large ribosomal subunit protein uL16 (149 aa).

It belongs to the universal ribosomal protein uL16 family. In terms of assembly, part of the 50S ribosomal subunit.

Binds 23S rRNA and is also seen to make contacts with the A and possibly P site tRNAs. This is Large ribosomal subunit protein uL16 from Dehalococcoides mccartyi (strain ATCC BAA-2100 / JCM 16839 / KCTC 5957 / BAV1).